Reading from the N-terminus, the 126-residue chain is Large ribosomal subunit protein bL12 (126 aa).

The protein belongs to the bacterial ribosomal protein bL12 family. As to quaternary structure, homodimer. Part of the ribosomal stalk of the 50S ribosomal subunit. Forms a multimeric L10(L12)X complex, where L10 forms an elongated spine to which 2 to 4 L12 dimers bind in a sequential fashion. Binds GTP-bound translation factors.

In terms of biological role, forms part of the ribosomal stalk which helps the ribosome interact with GTP-bound translation factors. Is thus essential for accurate translation. This Helicobacter hepaticus (strain ATCC 51449 / 3B1) protein is Large ribosomal subunit protein bL12.